A 409-amino-acid polypeptide reads, in one-letter code: Arginine deiminase (409 aa).

Cys-399 functions as the Amidino-cysteine intermediate in the catalytic mechanism.

It belongs to the arginine deiminase family.

It is found in the cytoplasm. It catalyses the reaction L-arginine + H2O = L-citrulline + NH4(+). Its pathway is amino-acid degradation; L-arginine degradation via ADI pathway; carbamoyl phosphate from L-arginine: step 1/2. This chain is Arginine deiminase (arcA), found in Latilactobacillus sakei (Lactobacillus sakei).